The primary structure comprises 108 residues: UPF0145 protein Tery_3795 (108 aa).

The protein belongs to the UPF0145 family.

The protein is UPF0145 protein Tery_3795 of Trichodesmium erythraeum (strain IMS101).